The chain runs to 69 residues: DNA gyrase inhibitor YacG (69 aa).

The Zn(2+) site is built by Cys-7, Cys-10, Cys-26, and Cys-30.

Belongs to the DNA gyrase inhibitor YacG family. As to quaternary structure, interacts with GyrB. Zn(2+) serves as cofactor.

Its function is as follows. Inhibits all the catalytic activities of DNA gyrase by preventing its interaction with DNA. Acts by binding directly to the C-terminal domain of GyrB, which probably disrupts DNA binding by the gyrase. The protein is DNA gyrase inhibitor YacG of Shewanella sp. (strain ANA-3).